A 108-amino-acid polypeptide reads, in one-letter code: UPF0060 membrane protein Mflv_3127 (108 aa).

4 helical membrane passes run 7–27 (LLFVLAAVLEIGGAWLVWQGF), 32–52 (GWLWVGAGVLALGAYGFVAAF), 61–81 (VLAAYGGVFVAGSLIWGMVAD), and 87–107 (RWDITGAAVCLLGVVLIMYAP).

This sequence belongs to the UPF0060 family.

Its subcellular location is the cell membrane. This Mycolicibacterium gilvum (strain PYR-GCK) (Mycobacterium gilvum (strain PYR-GCK)) protein is UPF0060 membrane protein Mflv_3127.